We begin with the raw amino-acid sequence, 185 residues long: ATP synthase subunit b 2 (185 aa).

The tract at residues Met1 to Pro26 is disordered. A helical membrane pass occupies residues Leu37–Pro57.

The protein belongs to the ATPase B chain family. F-type ATPases have 2 components, F(1) - the catalytic core - and F(0) - the membrane proton channel. F(1) has five subunits: alpha(3), beta(3), gamma(1), delta(1), epsilon(1). F(0) has three main subunits: a(1), b(2) and c(10-14). The alpha and beta chains form an alternating ring which encloses part of the gamma chain. F(1) is attached to F(0) by a central stalk formed by the gamma and epsilon chains, while a peripheral stalk is formed by the delta and b chains.

The protein resides in the cell inner membrane. F(1)F(0) ATP synthase produces ATP from ADP in the presence of a proton or sodium gradient. F-type ATPases consist of two structural domains, F(1) containing the extramembraneous catalytic core and F(0) containing the membrane proton channel, linked together by a central stalk and a peripheral stalk. During catalysis, ATP synthesis in the catalytic domain of F(1) is coupled via a rotary mechanism of the central stalk subunits to proton translocation. Its function is as follows. Component of the F(0) channel, it forms part of the peripheral stalk, linking F(1) to F(0). The b'-subunit is a diverged and duplicated form of b found in plants and photosynthetic bacteria. The polypeptide is ATP synthase subunit b 2 (atpF2) (Rhodopseudomonas palustris (strain ATCC BAA-98 / CGA009)).